Reading from the N-terminus, the 154-residue chain is 6,7-dimethyl-8-ribityllumazine synthase (154 aa).

Residues phenylalanine 22, 56-58, and 80-82 contribute to the 5-amino-6-(D-ribitylamino)uracil site; these read AFE and AVI. 85-86 is a binding site for (2S)-2-hydroxy-3-oxobutyl phosphate; it reads AT. Histidine 88 serves as the catalytic Proton donor. Phenylalanine 113 is a binding site for 5-amino-6-(D-ribitylamino)uracil. Arginine 127 provides a ligand contact to (2S)-2-hydroxy-3-oxobutyl phosphate.

The protein belongs to the DMRL synthase family. In terms of assembly, forms an icosahedral capsid composed of 60 subunits, arranged as a dodecamer of pentamers.

The enzyme catalyses (2S)-2-hydroxy-3-oxobutyl phosphate + 5-amino-6-(D-ribitylamino)uracil = 6,7-dimethyl-8-(1-D-ribityl)lumazine + phosphate + 2 H2O + H(+). It functions in the pathway cofactor biosynthesis; riboflavin biosynthesis; riboflavin from 2-hydroxy-3-oxobutyl phosphate and 5-amino-6-(D-ribitylamino)uracil: step 1/2. In terms of biological role, catalyzes the formation of 6,7-dimethyl-8-ribityllumazine by condensation of 5-amino-6-(D-ribitylamino)uracil with 3,4-dihydroxy-2-butanone 4-phosphate. This is the penultimate step in the biosynthesis of riboflavin. This is 6,7-dimethyl-8-ribityllumazine synthase from Geobacillus kaustophilus (strain HTA426).